The chain runs to 80 residues: Pigment-dispersing hormone peptides (80 aa).

A signal peptide spans 1–20 (MANYITIAIIVGIVCGQALS). A propeptide spanning residues 21 to 58 (VEDVDRNLLELNLPYGRGLDSELQLARLMLAAPRFCHP) is cleaved from the precursor. Alanine amide is present on A78.

It belongs to the arthropod PDH family. In terms of tissue distribution, expressed in the brain (at protein level).

It localises to the secreted. Functionally, neuropeptide PDF is the main transmitter regulating circadian locomotor rhythms. The protein is Pigment-dispersing hormone peptides of Camponotus floridanus (Florida carpenter ant).